We begin with the raw amino-acid sequence, 242 residues long: Proteasome subunit beta type-4 (242 aa).

A propeptide spanning residues 1–23 is cleaved from the precursor; it reads ESVARGTAPGELHCFPGAGPVRH. Thr-24 serves as the catalytic Nucleophile.

The protein belongs to the peptidase T1B family. The 26S proteasome consists of a 20S proteasome core and two 19S regulatory subunits. The 20S proteasome core is composed of 28 subunits that are arranged in four stacked rings, resulting in a barrel-shaped structure. The two end rings are each formed by seven alpha subunits, and the two central rings are each formed by seven beta subunits. The catalytic chamber with the active sites is on the inside of the barrel.

The protein localises to the cytoplasm. It is found in the nucleus. In terms of biological role, non-catalytic component of the proteasome, a multicatalytic proteinase complex which is characterized by its ability to cleave peptides with Arg, Phe, Tyr, Leu, and Glu adjacent to the leaving group at neutral or slightly basic pH. The proteasome has an ATP-dependent proteolytic activity. In Xenopus laevis (African clawed frog), this protein is Proteasome subunit beta type-4 (psmb4).